We begin with the raw amino-acid sequence, 1050 residues long: Elongation factor 3 (1050 aa).

2 residues coordinate ADP: Val-43 and His-45. Residues 46-83 (DVPVEFFEDLKKQIQSKDAKVSLAALDAYKHIASTNGL) form an HEAT 1 repeat. Ser-86 contributes to the ADP binding site. HEAT repeat units follow at residues 89 to 126 (PYVV…AITP), 127 to 165 (TAVK…TAKA), 169 to 206 (LRMP…TIDN), 208 to 244 (DIEK…EVTM), 245 to 282 (ATLS…LVED), and 288 to 326 (PFMD…VGAV). ADP-binding residues include Thr-395, His-399, and Glu-400. ABC transporter domains follow at residues 429–646 (DEGE…YYEL) and 672–998 (VKVS…KKDD). Asn-708, Glu-927, Asn-930, and His-956 together coordinate ADP. Positions 980–1050 (GHNWVQGQGS…DAYVSSDEEF (71 aa)) are disordered. Basic residues predominate over residues 1013 to 1037 (AAKKKKKLSSAELRKKKKERMKKKK).

This sequence belongs to the ABC transporter superfamily. ABCF family. EF3 subfamily. As to quaternary structure, monomer.

It is found in the cytoplasm. It carries out the reaction ATP + H2O = ADP + phosphate + H(+). It participates in protein biosynthesis; polypeptide chain elongation. Ribosome-dependent ATPase that functions in cytoplasmic translation elongation. Required for the ATP-dependent release of deacylated tRNA from the ribosomal E-site during protein biosynthesis. Stimulates the eEF1A-dependent binding of aminoacyl-tRNA to the ribosomal A-site, which has reduced affinity for tRNA as long as the E-site is occupied. Assists translation termination by stimulating the release of nascent protein from the ribosome by release factors. The sequence is that of Elongation factor 3 (CEF3) from Candida albicans (strain SC5314 / ATCC MYA-2876) (Yeast).